The primary structure comprises 589 residues: Serine/threonine-protein kinase shk2 (589 aa).

The region spanning 23–125 (GIIRSGWVML…WMDLISSRAL (103 aa)) is the PH domain. The CRIB domain occupies 129-142 (VSSPMNPKHQVHVG). The Protein kinase domain occupies 309-566 (FNVKHKLGQG…AAELLTHSFL (258 aa)). ATP is bound by residues 315-323 (LGQGASGSV) and lysine 343. Aspartate 434 functions as the Proton acceptor in the catalytic mechanism.

It belongs to the protein kinase superfamily. STE Ser/Thr protein kinase family. STE20 subfamily.

It catalyses the reaction L-seryl-[protein] + ATP = O-phospho-L-seryl-[protein] + ADP + H(+). The enzyme catalyses L-threonyl-[protein] + ATP = O-phospho-L-threonyl-[protein] + ADP + H(+). Its function is as follows. Forms an activated complex with GTP-bound Ras-like cdc42. Participates in Ras-dependent morphological control and mating response pathways. The chain is Serine/threonine-protein kinase shk2 (shk2) from Schizosaccharomyces pombe (strain 972 / ATCC 24843) (Fission yeast).